Consider the following 179-residue polypeptide: uncharacterized protein (179 aa).

This is an uncharacterized protein from Bacillus subtilis (strain 168).